Here is a 334-residue protein sequence, read N- to C-terminus: Holliday junction branch migration complex subunit RuvB (334 aa).

Residues 1-182 (MNERMVDQSM…FGVHLRLEYY (182 aa)) form a large ATPase domain (RuvB-L) region. Residues leucine 21, arginine 22, glycine 63, lysine 66, threonine 67, threonine 68, 129–131 (EDF), arginine 172, tyrosine 182, and arginine 219 each bind ATP. Residue threonine 67 coordinates Mg(2+). Residues 183-253 (NESDLKEIII…TTKHALGLLQ (71 aa)) form a small ATPAse domain (RuvB-S) region. Residues 256 to 334 (QHGLDYIDHK…HFAKSNEERE (79 aa)) form a head domain (RuvB-H) region. The DNA site is built by arginine 292, arginine 311, and arginine 316.

Belongs to the RuvB family. In terms of assembly, homohexamer. Forms an RuvA(8)-RuvB(12)-Holliday junction (HJ) complex. HJ DNA is sandwiched between 2 RuvA tetramers; dsDNA enters through RuvA and exits via RuvB. An RuvB hexamer assembles on each DNA strand where it exits the tetramer. Each RuvB hexamer is contacted by two RuvA subunits (via domain III) on 2 adjacent RuvB subunits; this complex drives branch migration. In the full resolvosome a probable DNA-RuvA(4)-RuvB(12)-RuvC(2) complex forms which resolves the HJ.

Its subcellular location is the cytoplasm. It carries out the reaction ATP + H2O = ADP + phosphate + H(+). Functionally, the RuvA-RuvB-RuvC complex processes Holliday junction (HJ) DNA during genetic recombination and DNA repair, while the RuvA-RuvB complex plays an important role in the rescue of blocked DNA replication forks via replication fork reversal (RFR). RuvA specifically binds to HJ cruciform DNA, conferring on it an open structure. The RuvB hexamer acts as an ATP-dependent pump, pulling dsDNA into and through the RuvAB complex. RuvB forms 2 homohexamers on either side of HJ DNA bound by 1 or 2 RuvA tetramers; 4 subunits per hexamer contact DNA at a time. Coordinated motions by a converter formed by DNA-disengaged RuvB subunits stimulates ATP hydrolysis and nucleotide exchange. Immobilization of the converter enables RuvB to convert the ATP-contained energy into a lever motion, pulling 2 nucleotides of DNA out of the RuvA tetramer per ATP hydrolyzed, thus driving DNA branch migration. The RuvB motors rotate together with the DNA substrate, which together with the progressing nucleotide cycle form the mechanistic basis for DNA recombination by continuous HJ branch migration. Branch migration allows RuvC to scan DNA until it finds its consensus sequence, where it cleaves and resolves cruciform DNA. This chain is Holliday junction branch migration complex subunit RuvB, found in Staphylococcus aureus (strain MRSA252).